We begin with the raw amino-acid sequence, 123 residues long: Large ribosomal subunit protein uL14 (123 aa).

It belongs to the universal ribosomal protein uL14 family. Part of the 50S ribosomal subunit. Forms a cluster with proteins L3 and L19. In the 70S ribosome, L14 and L19 interact and together make contacts with the 16S rRNA in bridges B5 and B8.

Binds to 23S rRNA. Forms part of two intersubunit bridges in the 70S ribosome. The chain is Large ribosomal subunit protein uL14 from Chromohalobacter salexigens (strain ATCC BAA-138 / DSM 3043 / CIP 106854 / NCIMB 13768 / 1H11).